Reading from the N-terminus, the 284-residue chain is 3-oxoadipate:acetyl-CoA acetyltransferase (284 aa).

H47, H49, and E229 together coordinate Zn(2+).

This sequence belongs to the BKACE family. Requires Zn(2+) as cofactor.

It catalyses the reaction 3-oxoadipate + acetyl-CoA = acetoacetate + succinyl-CoA. In terms of biological role, catalyzes the condensation of 3-oxoadipate (beta-ketoadipate) and acetyl-CoA, forming acetoacetate and succinyl-CoA. Is likely involved is the degradation of 3-oxoadipate through an alternative pathway, within catechol degradation. In Cupriavidus necator (strain ATCC 17699 / DSM 428 / KCTC 22496 / NCIMB 10442 / H16 / Stanier 337) (Ralstonia eutropha), this protein is 3-oxoadipate:acetyl-CoA acetyltransferase.